A 56-amino-acid polypeptide reads, in one-letter code: Large ribosomal subunit protein bL32 (56 aa).

The tract at residues 1-26 (MAVQKSKVTRSRRGQRRSHDALTAAA) is disordered. Over residues 7–16 (KVTRSRRGQR) the composition is skewed to basic residues.

It belongs to the bacterial ribosomal protein bL32 family.

This is Large ribosomal subunit protein bL32 (rpmF) from Moritella marina (Vibrio marinus).